The following is a 542-amino-acid chain: Neurofilament light polypeptide (542 aa).

Position 2 is an N-acetylserine (S2). The head stretch occupies residues 2 to 93 (SSFSYEPYFS…KSIRTQEKAQ (92 aa)). A glycan (O-linked (GlcNAc) threonine) is linked at T21. Position 23 is an asymmetric dimethylarginine; alternate (R23). R23 is modified (omega-N-methylarginine; alternate). O-linked (GlcNAc) serine glycosylation occurs at S27. Position 30 is an omega-N-methylarginine (R30). Y43 carries the post-translational modification Phosphotyrosine. 3 positions are modified to phosphoserine: S56, S67, and S103. The IF rod domain maps to 90 to 401 (EKAQLQDLND…KLLEGEETRL (312 aa)). The coil 1A stretch occupies residues 94–125 (LQDLNDRFASFIERVHELEQQNKVLEAELLVL). A linker 1 region spans residues 126-138 (RQKHSEPSRFRAL). The tract at residues 139–234 (YEQEIRDLRL…KVHEEEIAEL (96 aa)) is coil 1B. Positions 235 to 253 (QAQIQYAQISVEMDVSSKP) are linker 12. A coil 2A region spans residues 254–272 (DLSAALKDIRAQYEKLAAK). Residues 273–281 (NMQNAEEWF) form a linker 2 region. A coil 2B region spans residues 282–397 (KSRFTVLTES…AAYRKLLEGE (116 aa)). The interval 382–392 (ALDIEIAAYRK) is epitope; recognized by IF-specific monoclonal antibody. The tract at residues 398-444 (ETRLSFTSVGSITSGYSQSSQVFGRSAYSGLQSSSYLMSARAFPAYY) is tail, subdomain A. A tail region spans residues 398-542 (ETRLSFTSVG…GEEQAAKKKD (145 aa)). Positions 445 to 542 (TSHVQEEQSE…GEEQAAKKKD (98 aa)) are tail, subdomain B (acidic). The tract at residues 451–542 (EQSEVEETIE…GEEQAAKKKD (92 aa)) is disordered. The residue at position 453 (S453) is a Phosphoserine. Positions 460-471 (EATKAEEAKDEP) are enriched in basic and acidic residues. Residues 472–527 (PSEGEAEEEEKEKEEGEEEEGAEEEEAAKDESEDAKEEEGGEGEEEDTKESEEEEK) show a composition bias toward acidic residues. S473 and S503 each carry phosphoserine. T519 is subject to Phosphothreonine. Phosphoserine is present on residues S522 and S531. The segment covering 528 to 542 (KEESAGEEQAAKKKD) has biased composition (basic and acidic residues).

The protein belongs to the intermediate filament family. As to quaternary structure, forms homodimers (in vitro). Forms heterodimers with NEFH or NEFM; which can further hetero-oligomerize (in vitro). Forms heterodimers with INA (in vitro). Interacts with ARHGEF28. Interacts with TRIM2. In terms of processing, O-glycosylated; contains three N-acetylglucosamine side chains. Post-translationally, phosphorylated in the head and rod regions by the PKC kinase PKN1, leading to the inhibition of polymerization. Ubiquitinated in the presence of TRIM2 and UBE2D1. As to expression, expressed in the dorsal root ganglion neurons (at protein level).

Its subcellular location is the cell projection. The protein localises to the axon. It is found in the cytoplasm. The protein resides in the cytoskeleton. In terms of biological role, neurofilaments usually contain three intermediate filament proteins: NEFL, NEFM, and NEFH which are involved in the maintenance of neuronal caliber. May additionally cooperate with the neuronal intermediate filament proteins PRPH and INA to form neuronal filamentous networks. In Rattus norvegicus (Rat), this protein is Neurofilament light polypeptide (Nefl).